The chain runs to 99 residues: Beta-defensin 127 (99 aa).

An N-terminal signal peptide occupies residues 1 to 20 (MGLFMIIAILLFQKPTVTEQ). Cystine bridges form between Cys-24-Cys-53, Cys-33-Cys-47, and Cys-37-Cys-54. Positions 66-99 (ITKPPRPKPATLALTLQDYVTIIENFPSLKTQST) are excised as a propeptide.

It belongs to the beta-defensin family.

The protein resides in the secreted. Functionally, has antibacterial activity. This Homo sapiens (Human) protein is Beta-defensin 127 (DEFB127).